Consider the following 110-residue polypeptide: Nucleoid-associated protein Ent638_0951 (110 aa).

It belongs to the YbaB/EbfC family. Homodimer.

The protein resides in the cytoplasm. It is found in the nucleoid. In terms of biological role, binds to DNA and alters its conformation. May be involved in regulation of gene expression, nucleoid organization and DNA protection. The protein is Nucleoid-associated protein Ent638_0951 of Enterobacter sp. (strain 638).